The sequence spans 177 residues: MSRIAKYPVELPKGVEASIQPDQITVKGPLGILVQSLTGDVNVAQEDGKLTFVVANDSRHANAMSGTLRALVANMVTGVSKGFERKLNLVGVGYRAQIQGDAVKLQLGFSHDVVHQLPAGVKAECPTQTEIVIKGPNKQVVGQVAAEIRKYREPEPYKGKGVRYADERVVIKETKKK.

The protein belongs to the universal ribosomal protein uL6 family. In terms of assembly, part of the 50S ribosomal subunit.

Its function is as follows. This protein binds to the 23S rRNA, and is important in its secondary structure. It is located near the subunit interface in the base of the L7/L12 stalk, and near the tRNA binding site of the peptidyltransferase center. This is Large ribosomal subunit protein uL6 from Bordetella pertussis (strain Tohama I / ATCC BAA-589 / NCTC 13251).